Reading from the N-terminus, the 262-residue chain is Spindlin-W (262 aa).

A disordered region spans residues M1–P49. Basic residues predominate over residues M27 to N38.

The protein belongs to the SPIN/STSY family. In terms of tissue distribution, expressed predominantly in ovarian granulosa and thecal cell.

The protein localises to the nucleus. Its function is as follows. May play a role in mitosis. This is Spindlin-W (SPINW) from Gallus gallus (Chicken).